The chain runs to 295 residues: MEHQLLCCEVETIRRAYPDANLLNDRVLRAMLKAEETCAPSVSYFKCVQKEVLPSMRKIVATWMLEVCEEQKCEEEVFPLAMNYLDRFLSLEPVKKSRLQLLGATCMFVASKMKETIPLTAEKLCIYTDNSIRPEELLQMELLLVNKLKWNLAALTPHDFIEHFLSKMPEAEENKQIIRKHAQTFVALCATDVKFISNPPSMVAAGSVVAAVQGLNLRSPNSFLSYYRLTRFLSRVIKCDPDCLRACQEQIEALLESSLRQAQQNMDPKAAEEEEEEEEEVDLACTPTDVRDVDI.

The Cyclin N-terminal domain occupies 28–152 (LRAMLKAEET…LLVNKLKWNL (125 aa)). Residues 262-295 (AQQNMDPKAAEEEEEEEEEVDLACTPTDVRDVDI) form a disordered region. Lys-269 participates in a covalent cross-link: Glycyl lysine isopeptide (Lys-Gly) (interchain with G-Cter in ubiquitin). The span at 272-282 (EEEEEEEEEVD) shows a compositional bias: acidic residues. The residue at position 286 (Thr-286) is a Phosphothreonine.

This sequence belongs to the cyclin family. Cyclin D subfamily. In terms of assembly, interacts with either CDK4 or CDK6 protein kinase to form a serine/threonine kinase holoenzyme complex. The cyclin subunit imparts substrate specificity to the complex. Component of the ternary complex CCND1/CDK4/CDKN1B required for nuclear translocation and modulation of CDK4-mediated kinase activity. Interacts directly with CDKN1B. Can form similar complexes with either CDKN1A or CDKN2A. Interacts with UHRF2; the interaction ubiquitinates CCND1 and appears to occur independently of phosphorylation. Interacts with USP2. Interacts (via cyclin N-terminal domain) with INSM1 (via N-terminal region); the interaction competes with the binding of CCND1 to CDK4 during cell cycle progression and inhibits CDK4 activity. Interacts with CDK4; the interaction is prevented with the binding of CCND1 to INSM1 during cell cycle progression. Post-translationally, phosphorylation at Thr-286 by MAP kinases is required for ubiquitination and degradation by the DCX(AMBRA1) complex. It also plays an essential role for recognition by the FBXO31 component of SCF (SKP1-cullin-F-box) protein ligase complex following DNA damage. In terms of processing, ubiquitinated at Lys-269 by the DCX(AMBRA1) complex during the transition from G1 to S cell phase, leading to its degradation: ubiquitination is dependent on Thr-286 phosphorylation. The DCX(AMBRA1) complex represents the major regulator of CCND1 stability during the G1/S transition. Also ubiquitinated by the SCF(FBXO4) and Cul7-RING(FBXW8) ubiquitin-protein ligase complexes. Following DNA damage it is ubiquitinated by the SCF(FBXO31) protein ligase complex. SCF(FBXO31) ubiquitination is dependent on Thr-286 phosphorylation. Ubiquitinated also by UHRF2 apparently in a phosphorylation-independent manner. Ubiquitination leads to its degradation and G1 arrest. Deubiquitinated by USP2; leading to its stabilization.

The protein localises to the nucleus. Its subcellular location is the cytoplasm. It is found in the nucleus membrane. Its function is as follows. Regulatory component of the cyclin D1-CDK4 (DC) complex that phosphorylates and inhibits members of the retinoblastoma (RB) protein family including RB1 and regulates the cell-cycle during G(1)/S transition. Phosphorylation of RB1 allows dissociation of the transcription factor E2F from the RB/E2F complex and the subsequent transcription of E2F target genes which are responsible for the progression through the G(1) phase. Hypophosphorylates RB1 in early G(1) phase. Cyclin D-CDK4 complexes are major integrators of various mitogenenic and antimitogenic signals. Also a substrate for SMAD3, phosphorylating SMAD3 in a cell-cycle-dependent manner and repressing its transcriptional activity. Component of the ternary complex, cyclin D1/CDK4/CDKN1B, required for nuclear translocation and activity of the cyclin D-CDK4 complex. Exhibits transcriptional corepressor activity with INSM1 on the NEUROD1 and INS promoters in a cell cycle-independent manner. The protein is G1/S-specific cyclin-D1 (CCND1) of Pongo abelii (Sumatran orangutan).